The following is a 320-amino-acid chain: Protoheme IX farnesyltransferase (320 aa).

Transmembrane regions (helical) follow at residues 38-58 (VIELLLVSTLPTMIFAQRGFP), 60-80 (IGLILATLVGGAFAAGSAGVF), 109-129 (EALVFAWILGAASIAILWFGA), 132-152 (LSAWLGLGAIVFYVVIYTMIL), 159-179 (NIVWGGAAGCFPVLIAWAAVT), 184-204 (WPAIVLFMVIFLWTPPHYWPL), 222-242 (AIAGAKVVSVQVVLYAWAMVA), 254-276 (GWVYTIAAVAAGAWFLYESHALY), and 299-319 (YLTLLFIALAVDPFVGSAIVG).

This sequence belongs to the UbiA prenyltransferase family. Protoheme IX farnesyltransferase subfamily.

Its subcellular location is the cell membrane. It carries out the reaction heme b + (2E,6E)-farnesyl diphosphate + H2O = Fe(II)-heme o + diphosphate. It participates in porphyrin-containing compound metabolism; heme O biosynthesis; heme O from protoheme: step 1/1. In terms of biological role, converts heme B (protoheme IX) to heme O by substitution of the vinyl group on carbon 2 of heme B porphyrin ring with a hydroxyethyl farnesyl side group. This is Protoheme IX farnesyltransferase from Paenarthrobacter aurescens (strain TC1).